Consider the following 244-residue polypeptide: tRNA pseudouridine synthase A (244 aa).

The active-site Nucleophile is D52. Residue Y110 participates in substrate binding.

The protein belongs to the tRNA pseudouridine synthase TruA family. Homodimer.

It catalyses the reaction uridine(38/39/40) in tRNA = pseudouridine(38/39/40) in tRNA. Its function is as follows. Formation of pseudouridine at positions 38, 39 and 40 in the anticodon stem and loop of transfer RNAs. This Clostridium kluyveri (strain ATCC 8527 / DSM 555 / NBRC 12016 / NCIMB 10680 / K1) protein is tRNA pseudouridine synthase A.